Here is a 195-residue protein sequence, read N- to C-terminus: Putative Tricorn-like protease N-terminal subunit (195 aa).

It belongs to the peptidase S41B family.

The protein resides in the cytoplasm. Functionally, degrades oligopeptides in a sequential manner. In Sulfurisphaera tokodaii (strain DSM 16993 / JCM 10545 / NBRC 100140 / 7) (Sulfolobus tokodaii), this protein is Putative Tricorn-like protease N-terminal subunit (triN).